The following is a 397-amino-acid chain: Cytoplasmic tRNA 2-thiolation protein 2 (397 aa).

It belongs to the CTU2/NCS2 family.

It localises to the cytoplasm. The protein operates within tRNA modification; 5-methoxycarbonylmethyl-2-thiouridine-tRNA biosynthesis. Plays a central role in 2-thiolation of mcm(5)S(2)U at tRNA wobble positions of tRNA(Lys), tRNA(Glu) and tRNA(Gln). May act by forming a heterodimer with NCS6/CTU1 that ligates sulfur from thiocarboxylated URM1 onto the uridine of tRNAs at wobble position. The chain is Cytoplasmic tRNA 2-thiolation protein 2 from Drosophila grimshawi (Hawaiian fruit fly).